A 510-amino-acid chain; its full sequence is Histidine ammonia-lyase (510 aa).

A cross-link (5-imidazolinone (Ala-Gly)) is located at residues 143 to 145; it reads ASG. Ser144 carries the 2,3-didehydroalanine (Ser) modification.

It belongs to the PAL/histidase family. In terms of processing, contains an active site 4-methylidene-imidazol-5-one (MIO), which is formed autocatalytically by cyclization and dehydration of residues Ala-Ser-Gly.

The protein localises to the cytoplasm. The catalysed reaction is L-histidine = trans-urocanate + NH4(+). Its pathway is amino-acid degradation; L-histidine degradation into L-glutamate; N-formimidoyl-L-glutamate from L-histidine: step 1/3. This Shewanella woodyi (strain ATCC 51908 / MS32) protein is Histidine ammonia-lyase.